We begin with the raw amino-acid sequence, 462 residues long: uncharacterized protein (462 aa).

This sequence belongs to the IIV-6 329R family.

This is an uncharacterized protein from Aedes vexans (Inland floodwater mosquito).